A 434-amino-acid chain; its full sequence is UDP-N-acetylglucosamine 1-carboxyvinyltransferase (434 aa).

Residue 22–23 (KN) participates in phosphoenolpyruvate binding. Arg93 lines the UDP-N-acetyl-alpha-D-glucosamine pocket. Cys117 functions as the Proton donor in the catalytic mechanism. 2-(S-cysteinyl)pyruvic acid O-phosphothioketal is present on Cys117. Residues Asp307 and Val329 each contribute to the UDP-N-acetyl-alpha-D-glucosamine site.

Belongs to the EPSP synthase family. MurA subfamily.

The protein localises to the cytoplasm. It catalyses the reaction phosphoenolpyruvate + UDP-N-acetyl-alpha-D-glucosamine = UDP-N-acetyl-3-O-(1-carboxyvinyl)-alpha-D-glucosamine + phosphate. It functions in the pathway cell wall biogenesis; peptidoglycan biosynthesis. In terms of biological role, cell wall formation. Adds enolpyruvyl to UDP-N-acetylglucosamine. This Coxiella burnetii (strain CbuG_Q212) (Coxiella burnetii (strain Q212)) protein is UDP-N-acetylglucosamine 1-carboxyvinyltransferase.